Consider the following 375-residue polypeptide: MAGTPGHPIFLLLLLRAIGQVSPYSTHWKPTWPAYRLPVVLPQSTFNLAKPDFGAEAKLEVSSSCGPQCHKGTPLPTYEEAKQYLSYETLYANGSRTETQVGIYVLRSGEEQSSGKSRRKRQIYGYDSRFSIFGKDFLLNYPFSTSVKLSTGCTGTLVAEKHVLTAAHCIHDGKTYVKGTQKLRVGFLKPKFKDGRGANDSHSALPEKMKFQWIRVKRTHVPKGWIKGNANDIGMDYDYALLELKKPHKRKFMKIGVSPPAKQLPGGRIHFSGYDNDRPGNLVYRFCDVQDETYDLLYQQCDAQPGASGSGVYVRMWKRQQQKWERKIIGIFSGHQWVDVNGSPQDFNVAVRITPLKYAQICYWIKGNYVDCREG.

Positions 1–23 are cleaved as a signal peptide; it reads MAGTPGHPIFLLLLLRAIGQVSP. N-linked (GlcNAc...) asparagine glycosylation is present at Asn93. Cys153 and Cys169 form a disulfide bridge. His168 acts as the Charge relay system in catalysis. N-linked (GlcNAc...) asparagine glycosylation is present at Asn199. Catalysis depends on charge relay system residues Asp232 and Ser308.

The protein belongs to the peptidase S1 family.

It localises to the secreted. In Bos taurus (Bovine), this protein is Serine protease 23 (PRSS23).